A 317-amino-acid chain; its full sequence is MHNYLDFEKPISDLEGKILELKKLAGEDESVNTSDEVARLEGRVRDAMMEIYSKLSPWQKTQVARHPSRPHFLDYAAELFTEFTPLAGDRNFANDDAIQAGLARFRGAPVAVIGQEKGNDTKSRIKHNFGSPRPEGYRKAVRVMEMADRFGLPLITLVDTAGAYPGVNAEERGQAEAIARSTEMCLNVKVPIVTVVIGEGGSGGAIAIATGNRVYMLEHSIYSVISPEGAASILWRDSTRAKEAASNMKITAEDLKSLGVIDGIIPEPVGGAHRDPQAVIGRTGTVIADALKELSGRNGDELRADRRQKYLNIGRNL.

Residues 40 to 293 (LEGRVRDAMM…GTVIADALKE (254 aa)) form the CoA carboxyltransferase C-terminal domain.

The protein belongs to the AccA family. Acetyl-CoA carboxylase is a heterohexamer composed of biotin carboxyl carrier protein (AccB), biotin carboxylase (AccC) and two subunits each of ACCase subunit alpha (AccA) and ACCase subunit beta (AccD).

It localises to the cytoplasm. It carries out the reaction N(6)-carboxybiotinyl-L-lysyl-[protein] + acetyl-CoA = N(6)-biotinyl-L-lysyl-[protein] + malonyl-CoA. It functions in the pathway lipid metabolism; malonyl-CoA biosynthesis; malonyl-CoA from acetyl-CoA: step 1/1. Its function is as follows. Component of the acetyl coenzyme A carboxylase (ACC) complex. First, biotin carboxylase catalyzes the carboxylation of biotin on its carrier protein (BCCP) and then the CO(2) group is transferred by the carboxyltransferase to acetyl-CoA to form malonyl-CoA. The chain is Acetyl-coenzyme A carboxylase carboxyl transferase subunit alpha from Sinorhizobium fredii (strain NBRC 101917 / NGR234).